The chain runs to 117 residues: S-adenosylmethionine decarboxylase proenzyme (117 aa).

The Schiff-base intermediate with substrate; via pyruvic acid role is filled by S63. S63 carries the pyruvic acid (Ser); by autocatalysis modification. H68 functions as the Proton acceptor; for processing activity in the catalytic mechanism. The active-site Proton donor; for catalytic activity is C83.

Belongs to the prokaryotic AdoMetDC family. Type 1 subfamily. As to quaternary structure, heterotetramer of two alpha and two beta chains arranged as a dimer of alpha/beta heterodimers. Pyruvate is required as a cofactor. Is synthesized initially as an inactive proenzyme. Formation of the active enzyme involves a self-maturation process in which the active site pyruvoyl group is generated from an internal serine residue via an autocatalytic post-translational modification. Two non-identical subunits are generated from the proenzyme in this reaction, and the pyruvate is formed at the N-terminus of the alpha chain, which is derived from the carboxyl end of the proenzyme. The post-translation cleavage follows an unusual pathway, termed non-hydrolytic serinolysis, in which the side chain hydroxyl group of the serine supplies its oxygen atom to form the C-terminus of the beta chain, while the remainder of the serine residue undergoes an oxidative deamination to produce ammonia and the pyruvoyl group blocking the N-terminus of the alpha chain.

The enzyme catalyses S-adenosyl-L-methionine + H(+) = S-adenosyl 3-(methylsulfanyl)propylamine + CO2. The protein operates within amine and polyamine biosynthesis; S-adenosylmethioninamine biosynthesis; S-adenosylmethioninamine from S-adenosyl-L-methionine: step 1/1. Its function is as follows. Catalyzes the decarboxylation of S-adenosylmethionine to S-adenosylmethioninamine (dcAdoMet), the propylamine donor required for the synthesis of the polyamines spermine and spermidine from the diamine putrescine. The chain is S-adenosylmethionine decarboxylase proenzyme from Methanococcus aeolicus (strain ATCC BAA-1280 / DSM 17508 / OCM 812 / Nankai-3).